The primary structure comprises 3165 residues: Protein eyes shut homolog (3165 aa).

Positions Met1–Gly21 are cleaved as a signal peptide. Asn42, Asn105, Asn117, and Asn166 each carry an N-linked (GlcNAc...) asparagine glycan. 3 consecutive EGF-like domains span residues Lys170–Gln212, Glu213–Ser254, and Ile256–Glu292. Cystine bridges form between Cys174–Cys189, Cys183–Cys200, Cys202–Cys211, Cys217–Cys228, Cys222–Cys242, Cys244–Cys253, Cys260–Cys270, Cys265–Cys280, and Cys282–Cys291. N-linked (GlcNAc...) asparagine glycans are attached at residues Asn252, Asn269, and Asn272. N-linked (GlcNAc...) asparagine glycosylation is found at Asn311 and Asn343. EGF-like domains follow at residues Asp332 to Lys368 and Phe370 to Glu406. Cystine bridges form between Cys341/Cys356 and Cys358/Cys367. Asn382 carries an N-linked (GlcNAc...) asparagine glycan. Cys396 and Cys405 are joined by a disulfide. Residues Asn506, Asn520, Asn521, Asn566, and Asn573 are each glycosylated (N-linked (GlcNAc...) asparagine). EGF-like domains follow at residues Asn566–Val602, Asn604–Glu641, and Asp643–Glu679. Disulfide bonds link Cys592/Cys601 and Cys608/Cys620. Asn611 and Asn628 each carry an N-linked (GlcNAc...) asparagine glycan. Residues Cys629 and Cys640 are joined by a disulfide bond. N-linked (GlcNAc...) asparagine glycosylation occurs at Asn654. 4 cysteine pairs are disulfide-bonded: Cys669/Cys678, Cys685/Cys696, Cys690/Cys705, and Cys707/Cys719. One can recognise an EGF-like 9; calcium-binding domain in the interval Asp681–Leu720. An EGF-like 10 domain is found at Asn733 to Glu769. N-linked (GlcNAc...) asparagine glycosylation occurs at Asn745. Cystine bridges form between Cys759/Cys768, Cys775/Cys786, Cys780/Cys795, Cys797/Cys806, Cys813/Cys824, Cys818/Cys835, Cys837/Cys846, Cys853/Cys866, Cys860/Cys876, Cys878/Cys887, Cys894/Cys905, Cys899/Cys914, Cys916/Cys925, Cys932/Cys943, Cys937/Cys952, Cys954/Cys963, Cys970/Cys981, Cys975/Cys990, Cys992/Cys1001, Cys1008/Cys1019, Cys1013/Cys1028, Cys1030/Cys1039, Cys1046/Cys1056, Cys1051/Cys1065, Cys1067/Cys1076, Cys1083/Cys1094, Cys1088/Cys1103, Cys1105/Cys1114, Cys1121/Cys1137, Cys1131/Cys1147, Cys1149/Cys1158, Cys1165/Cys1176, Cys1170/Cys1185, and Cys1187/Cys1196. The region spanning Glu771 to Ser807 is the EGF-like 11; calcium-binding domain. N-linked (GlcNAc...) asparagine glycosylation is found at Asn782, Asn783, and Asn805. 3 EGF-like domains span residues Glu809–His847, Arg849–Glu888, and Asp890–Glu926. Asn862 and Asn863 each carry an N-linked (GlcNAc...) asparagine glycan. Positions Glu928–Glu964 constitute an EGF-like 15; calcium-binding domain. N-linked (GlcNAc...) asparagine glycosylation occurs at Asn940. The 37-residue stretch at Glu966 to Glu1002 folds into the EGF-like 16 domain. One can recognise an EGF-like 17; calcium-binding domain in the interval Asn1004–Glu1040. EGF-like domains lie at Asn1042 to Lys1077, Lys1079 to Glu1115, and Ser1117 to Glu1159. An EGF-like 21; calcium-binding domain is found at Asn1161 to Glu1197. N-linked (GlcNAc...) asparagine glycosylation is found at Asn1509, Asn1906, Asn1941, and Asn2033. In terms of domain architecture, Laminin G-like 1 spans Phe1883–Cys2063. Cystine bridges form between Cys2037-Cys2063, Cys2103-Cys2114, Cys2108-Cys2128, and Cys2130-Cys2139. In terms of domain architecture, EGF-like 22 spans Ala2099–Glu2140. One can recognise a Laminin G-like 2 domain in the interval Leu2145 to Cys2339. Asn2170, Asn2185, and Asn2228 each carry an N-linked (GlcNAc...) asparagine glycan. Disulfide bonds link Cys2308–Cys2339, Cys2339–Cys2350, Cys2344–Cys2359, Cys2375–Cys2386, Cys2380–Cys2396, and Cys2398–Cys2407. 2 consecutive EGF-like domains span residues His2335–Lys2368 and Gln2371–Thr2408. An N-linked (GlcNAc...) asparagine glycan is attached at Asn2347. 5 N-linked (GlcNAc...) asparagine glycosylation sites follow: Asn2412, Asn2453, Asn2484, Asn2506, and Asn2532. One can recognise a Laminin G-like 3 domain in the interval Ser2419–Cys2609. Intrachain disulfides connect Cys2576–Cys2609, Cys2614–Cys2625, and Cys2619–Cys2634. EGF-like domains lie at His2610 to Thr2646 and Thr2648 to Glu2689. N-linked (GlcNAc...) asparagine glycosylation occurs at Asn2635. 4 disulfides stabilise this stretch: Cys2636–Cys2645, Cys2652–Cys2668, Cys2662–Cys2677, and Cys2679–Cys2688. A Laminin G-like 4 domain is found at Asp2717–Cys2895. Residues Asn2775, Asn2800, and Asn2824 are each glycosylated (N-linked (GlcNAc...) asparagine). Cystine bridges form between Cys2868–Cys2895, Cys2900–Cys2911, Cys2905–Cys2920, and Cys2922–Cys2931. 2 EGF-like domains span residues Asp2896–Asn2932 and Gln2933–Glu2970. Asn2914 carries N-linked (GlcNAc...) asparagine glycosylation. Asn2932 is a glycosylation site (N-linked (GlcNAc...) asparagine). Cystine bridges form between Cys2937/Cys2948, Cys2942/Cys2958, and Cys2960/Cys2969. 6 N-linked (GlcNAc...) asparagine glycosylation sites follow: Asn2971, Asn3006, Asn3036, Asn3057, Asn3073, and Asn3082. Residues Phe2975 to Thr3165 form the Laminin G-like 5 domain.

It belongs to the EYS family. Expressed in retina (at protein level).

Its subcellular location is the cell projection. It localises to the cilium. It is found in the photoreceptor outer segment. The protein localises to the cytoplasm. The protein resides in the cytoskeleton. Its subcellular location is the cilium axoneme. It localises to the microtubule organizing center. It is found in the centrosome. The protein localises to the secreted. The protein resides in the extracellular space. Its subcellular location is the extracellular matrix. It localises to the interphotoreceptor matrix. In terms of biological role, required to maintain the integrity of photoreceptor cells. Specifically required for normal morphology of the photoreceptor ciliary pocket, and might thus facilitate protein trafficking between the photoreceptor inner and outer segments via the transition zone. This chain is Protein eyes shut homolog, found in Macaca fascicularis (Crab-eating macaque).